The chain runs to 824 residues: Glycerol-3-phosphate acyltransferase (824 aa).

The HXXXXD motif signature appears at 302-307; the sequence is CHRSHM.

This sequence belongs to the GPAT/DAPAT family.

It is found in the cell inner membrane. The enzyme catalyses sn-glycerol 3-phosphate + an acyl-CoA = a 1-acyl-sn-glycero-3-phosphate + CoA. It participates in phospholipid metabolism; CDP-diacylglycerol biosynthesis; CDP-diacylglycerol from sn-glycerol 3-phosphate: step 1/3. In Actinobacillus pleuropneumoniae serotype 5b (strain L20), this protein is Glycerol-3-phosphate acyltransferase.